Here is a 148-residue protein sequence, read N- to C-terminus: Suppressor APC domain-containing protein 1 (148 aa).

A disordered region spans residues 120-148 (SRQQKGVTQPKEEMAQRGCTKGPRGPTRV).

The protein is Suppressor APC domain-containing protein 1 (SAPCD1) of Homo sapiens (Human).